A 268-amino-acid chain; its full sequence is Tryptophan synthase alpha chain (268 aa).

Catalysis depends on proton acceptor residues glutamate 49 and aspartate 60.

Belongs to the TrpA family. Tetramer of two alpha and two beta chains.

It catalyses the reaction (1S,2R)-1-C-(indol-3-yl)glycerol 3-phosphate + L-serine = D-glyceraldehyde 3-phosphate + L-tryptophan + H2O. It participates in amino-acid biosynthesis; L-tryptophan biosynthesis; L-tryptophan from chorismate: step 5/5. Its function is as follows. The alpha subunit is responsible for the aldol cleavage of indoleglycerol phosphate to indole and glyceraldehyde 3-phosphate. This is Tryptophan synthase alpha chain from Salmonella paratyphi A (strain ATCC 9150 / SARB42).